Here is a 98-residue protein sequence, read N- to C-terminus: NADH-ubiquinone oxidoreductase chain 4L (98 aa).

The next 3 helical transmembrane spans lie at 1-21 (MTPLNINLTMAFFLALAGVLI), 28-48 (STLLCLEGMMLSLFILLSLLI), and 59-79 (APLILLVFSACEAGVGLALLV).

This sequence belongs to the complex I subunit 4L family. In terms of assembly, core subunit of respiratory chain NADH dehydrogenase (Complex I) which is composed of 45 different subunits.

The protein resides in the mitochondrion inner membrane. The catalysed reaction is a ubiquinone + NADH + 5 H(+)(in) = a ubiquinol + NAD(+) + 4 H(+)(out). Core subunit of the mitochondrial membrane respiratory chain NADH dehydrogenase (Complex I) which catalyzes electron transfer from NADH through the respiratory chain, using ubiquinone as an electron acceptor. Part of the enzyme membrane arm which is embedded in the lipid bilayer and involved in proton translocation. This Tarsipes rostratus (Honey possum) protein is NADH-ubiquinone oxidoreductase chain 4L (MT-ND4L).